Here is a 780-residue protein sequence, read N- to C-terminus: Striatin (780 aa).

Residues 53–120 (LHFLQHEWAR…QERAKYHKLK (68 aa)) are a coiled coil. A caveolin-binding region spans residues 55–63 (FLQHEWARF). Positions 124–145 (ELNQGDMKPPSYDSDEGNETEV) are disordered. At S137 the chain carries Phosphoserine. Positions 149 to 166 (QNSQFMWKQGRQLLRQYL) are calmodulin-binding. Position 225 is a phosphothreonine (T225). Residues S227, S229, S245, and S259 each carry the phosphoserine modification. Disordered stretches follow at residues 290 to 321 (FLVASEEGDNESRSAGDGTDWEKEDQCLTPER), 334 to 353 (EQYKKERKGKKGVKRPNRSK), and 363 to 388 (DVDELPSLQPSVGSPSRPSSSRLPEQ). The segment covering 299–315 (NESRSAGDGTDWEKEDQ) has biased composition (basic and acidic residues). A compositionally biased stretch (basic residues) spans 338 to 351 (KERKGKKGVKRPNR). WD repeat units follow at residues 461–500 (SHFDGIRALAFHPIEPVLITASEDHTLKMWNLQKTAPAKK), 514–553 (AHKGPVLCVVMSSNGEQCYSGGTDGLIQSWSTTNPNVDPY), 567–606 (GHTDAVWGLAYSAAHQRLLSCSADGTLRLWTTTEVAPALT), 662–701 (SSSCQINRVISHPTLPISITAHEDRHIKFYDNNTGKLIHS), 704–743 (AHLEAVTSLAVDPNGLYLMSGSHDCSIRLWNLESKTCIQE), and 750–780 (KFEESIHDVAFHPSKCYIASAGADALAKVFV).

The protein belongs to the WD repeat striatin family. In terms of assembly, part of the core of STRIPAK complexes composed of PP2A catalytic and scaffolding subunits, the striatins (PP2A regulatory subunits), the striatin-associated proteins MOB4, STRIP1 and STRIP2, PDCD10 and members of the STE20 kinases, such as STK24 and STK26. Interacts with CTTNBP2; this interaction may regulate dendritic spine distribution of STRN. Activation of glutamate receptors weakens the interaction with CTTNBP2. In terms of tissue distribution, mainly expressed in the central nervous system. Mostly confined in dendrites, not in axons, and is most abundant in dendritic spines.

It localises to the cytoplasm. The protein localises to the membrane. The protein resides in the cell projection. Its subcellular location is the dendritic spine. In terms of biological role, calmodulin-binding scaffolding protein which is the center of the striatin-interacting phosphatase and kinase (STRIPAK) complexes. STRIPAK complexes have critical roles in protein (de)phosphorylation and are regulators of multiple signaling pathways including Hippo, MAPK, nuclear receptor and cytoskeleton remodeling. Different types of STRIPAK complexes are involved in a variety of biological processes such as cell growth, differentiation, apoptosis, metabolism and immune regulation. This Rattus norvegicus (Rat) protein is Striatin (Strn).